The primary structure comprises 827 residues: MEIIRAKHMGFCFGVLEAINVCNSLVEEKGRKYILGMLVHNKQVVEDMERKGFKLVTEDELLNDMDELKEDDIVVIRAHGTSKSVHEKLKERKVKVFDATCIFVNKIRQEIEIANENGYSILFMGDKNHPEVKGVISFADDIQIFESFEEAKKLKIDLDKTYLLSTQTTLNKKKFEEIKKYFKENYKNVVIFDKICGATAVRQKAVEDLAVKVEVMIIVGDTKSSNTKKLYEISKKLNDNSYLVENEEQLDLSIFRGKEVVGITAGASTPEETIMNIEKKVRGIYKMSNVNENQNEFSLMLEEFLPNQEKRVEGVIESMDQNFSYLDVPGERTAVRVRTDELKDYKVGDTVEVLITGLSEEDDDQEYITASRRKIEVEKNWEKIEDSFKNKTILDAKVTKKIKGGYLVEAFLYPGFLPNSLSEISDSEEKVNGKKIQVIVKDIKMDPKDKKNRKITYSVKDIRLAEQEKEFAGLAVGQIVDCVVTEVLDFGLAVDINTLKGFIHISEVSWKRLDKLSDNYKVGDKIKAVVVSLDEAKRNVKLSIKKLEEDPWATVANEFKVDDEIEGIVTKVLPYGAFVEIKPGVEGLVHISDFSWTKKKVNVADYVKEREKIKVRITDLHPEDRKLKLGIKQLVANPWETAEKDFAIDTVIKGKVVEVKPFGIFVEIADGIDAFVHSSDYNWVGEEIPKFEIGNEVELKITELDLNNKKIKGSLKALRKSPWEHAMEEYKVGTTVEKKIKTVADFGLFIELIKGIDGFIPTQFASKEFIKNIRDKFSEGDVVKAQVVEVNKETQKIKLSIKKIEIEEEKREEREQIEKYSTSSSEE.

The interval 1–284 is 4-hydroxy-3-methylbut-2-enyl diphosphate reductase; sequence MEIIRAKHMG…MNIEKKVRGI (284 aa). [4Fe-4S] cluster is bound at residue C12. Positions 40 and 79 each coordinate (2E)-4-hydroxy-3-methylbut-2-enyl diphosphate. Positions 40 and 79 each coordinate dimethylallyl diphosphate. 2 residues coordinate isopentenyl diphosphate: H40 and H79. C101 provides a ligand contact to [4Fe-4S] cluster. Residue H129 coordinates (2E)-4-hydroxy-3-methylbut-2-enyl diphosphate. H129 provides a ligand contact to dimethylallyl diphosphate. H129 lines the isopentenyl diphosphate pocket. E131 serves as the catalytic Proton donor. Residue T168 coordinates (2E)-4-hydroxy-3-methylbut-2-enyl diphosphate. C196 serves as a coordination point for [4Fe-4S] cluster. Residues S224, S225, N226, and S268 each contribute to the (2E)-4-hydroxy-3-methylbut-2-enyl diphosphate site. Residues S224, S225, N226, and S268 each contribute to the dimethylallyl diphosphate site. Residues S224, S225, N226, and S268 each coordinate isopentenyl diphosphate. 4 S1 motif domains span residues 477–545, 562–632, 649–716, and 733–802; these read GQIV…LSIK, DDEI…LGIK, DTVI…GSLK, and GTTV…LSIK.

It in the N-terminal section; belongs to the IspH family. The cofactor is [4Fe-4S] cluster.

It carries out the reaction isopentenyl diphosphate + 2 oxidized [2Fe-2S]-[ferredoxin] + H2O = (2E)-4-hydroxy-3-methylbut-2-enyl diphosphate + 2 reduced [2Fe-2S]-[ferredoxin] + 2 H(+). The catalysed reaction is dimethylallyl diphosphate + 2 oxidized [2Fe-2S]-[ferredoxin] + H2O = (2E)-4-hydroxy-3-methylbut-2-enyl diphosphate + 2 reduced [2Fe-2S]-[ferredoxin] + 2 H(+). The protein operates within isoprenoid biosynthesis; dimethylallyl diphosphate biosynthesis; dimethylallyl diphosphate from (2E)-4-hydroxy-3-methylbutenyl diphosphate: step 1/1. It functions in the pathway isoprenoid biosynthesis; isopentenyl diphosphate biosynthesis via DXP pathway; isopentenyl diphosphate from 1-deoxy-D-xylulose 5-phosphate: step 6/6. Functionally, catalyzes the conversion of 1-hydroxy-2-methyl-2-(E)-butenyl 4-diphosphate (HMBPP) into a mixture of isopentenyl diphosphate (IPP) and dimethylallyl diphosphate (DMAPP). Acts in the terminal step of the DOXP/MEP pathway for isoprenoid precursor biosynthesis. The protein is 4-hydroxy-3-methylbut-2-enyl diphosphate reductase of Fusobacterium nucleatum subsp. nucleatum (strain ATCC 25586 / DSM 15643 / BCRC 10681 / CIP 101130 / JCM 8532 / KCTC 2640 / LMG 13131 / VPI 4355).